The chain runs to 117 residues: cAMP-regulated phosphoprotein 19-B (117 aa).

Positions Met1–Leu37 are enriched in basic and acidic residues. Residues Met1–Leu54 are disordered. Ser28 bears the Phosphoserine; by CDK2 mark. Ser67 bears the Phosphoserine; by GWL mark. Residues Met77–Gly117 form a disordered region. Thr99 carries the phosphothreonine; by CDK2 modification. At Ser109 the chain carries Phosphoserine; by PKA.

The protein belongs to the endosulfine family. As to quaternary structure, interacts (when phosphorylated at Ser-67) with ppp2r2d. Post-translationally, phosphorylation at Ser-67 by gwl during mitosis is essential for interaction with ppp2r2d (PR55-delta) and subsequent inactivation of PP2A.

The protein localises to the cytoplasm. Functionally, protein phosphatase inhibitor that specifically inhibits protein phosphatase 2A (PP2A) during mitosis. When phosphorylated at Ser-67 during mitosis, specifically interacts with ppp2r2d (PR55-delta) and inhibits its activity, leading to inactivation of PP2A, an essential condition to keep cyclin-B1-CDK1 activity high during M phase. This Xenopus laevis (African clawed frog) protein is cAMP-regulated phosphoprotein 19-B (arpp19-b).